We begin with the raw amino-acid sequence, 469 residues long: 6-phospho-beta-galactosidase (469 aa).

D-galactose 6-phosphate-binding residues include Q19, H116, N159, E160, and N297. The Proton donor role is filled by E160. E375 (nucleophile) is an active-site residue. Positions 428, 429, 435, and 437 each coordinate D-galactose 6-phosphate.

It belongs to the glycosyl hydrolase 1 family.

It carries out the reaction a 6-phospho-beta-D-galactoside + H2O = D-galactose 6-phosphate + an alcohol. The protein operates within carbohydrate metabolism; lactose degradation; D-galactose 6-phosphate and beta-D-glucose from lactose 6-phosphate: step 1/1. The protein is 6-phospho-beta-galactosidase of Streptococcus equi subsp. zooepidemicus (strain MGCS10565).